The chain runs to 391 residues: NADH-quinone oxidoreductase subunit D (391 aa).

This sequence belongs to the complex I 49 kDa subunit family. As to quaternary structure, NDH-1 is composed of 14 different subunits. Subunits NuoB, C, D, E, F, and G constitute the peripheral sector of the complex.

It is found in the cell inner membrane. The catalysed reaction is a quinone + NADH + 5 H(+)(in) = a quinol + NAD(+) + 4 H(+)(out). NDH-1 shuttles electrons from NADH, via FMN and iron-sulfur (Fe-S) centers, to quinones in the respiratory chain. The immediate electron acceptor for the enzyme in this species is believed to be ubiquinone. Couples the redox reaction to proton translocation (for every two electrons transferred, four hydrogen ions are translocated across the cytoplasmic membrane), and thus conserves the redox energy in a proton gradient. The protein is NADH-quinone oxidoreductase subunit D of Pelagibacter ubique (strain HTCC1062).